The following is a 476-amino-acid chain: Probable periplasmic serine endoprotease DegP-like (476 aa).

Residues 1–27 (MSIPRLKSYFTILATVLVLGQAVSAQA) form the signal peptide. Catalysis depends on charge relay system residues His-116, Asp-146, and Ser-219. Residues 217 to 219 (GNS) and 274 to 278 (LGVVI) contribute to the substrate site. PDZ domains follow at residues 263–354 (LKTG…IRDG) and 360–465 (ELTV…LRQG).

It belongs to the peptidase S1C family.

Its subcellular location is the periplasm. The enzyme catalyses Acts on substrates that are at least partially unfolded. The cleavage site P1 residue is normally between a pair of hydrophobic residues, such as Val-|-Val.. Might be efficient in the degradation of transiently denatured and unfolded proteins which accumulate in the periplasm following stress conditions. The protein is Probable periplasmic serine endoprotease DegP-like (mucD) of Pseudomonas fluorescens (strain ATCC BAA-477 / NRRL B-23932 / Pf-5).